A 218-amino-acid chain; its full sequence is Small ribosomal subunit protein uS3c (218 aa).

Positions 47 to 118 (VQKNIRISSG…KLNIAITRIS (72 aa)) constitute a KH type-2 domain.

Belongs to the universal ribosomal protein uS3 family. Part of the 30S ribosomal subunit.

It is found in the plastid. It localises to the chloroplast. The protein is Small ribosomal subunit protein uS3c (rps3) of Crucihimalaya wallichii (Rock-cress).